Here is a 318-residue protein sequence, read N- to C-terminus: Glycine--tRNA ligase alpha subunit (318 aa).

The protein belongs to the class-II aminoacyl-tRNA synthetase family. In terms of assembly, tetramer of two alpha and two beta subunits.

It localises to the cytoplasm. The catalysed reaction is tRNA(Gly) + glycine + ATP = glycyl-tRNA(Gly) + AMP + diphosphate. The chain is Glycine--tRNA ligase alpha subunit from Chelativorans sp. (strain BNC1).